Reading from the N-terminus, the 326-residue chain is MFSSLNTRPAGQSLFGANTGGGLFGQSLANQPQQQQQPLQQQQQQAAPALGQSQINQNQQLGGSLWQPGSLTAYQKPIPEQIKLIVDKWNPNHPNCAFKTYLYNKVDEHTVPLYGPGPNEDPKEWEEALQRKPAPNFIPVLCSGFPSIVARLMLQRRVITEFNNKLHQINASLDAILSRHDLDHTVRAFNARRRHAELSRRCLHLAARVQVLRNRGYALSGDEDELKQKLQQIDKTLNDPAQGSRLEELWSRLIVLRGYAEDLKDQINQAGITESDGLGEEIEAKAKKILEDYDKQLQHLKKQVEEAKKDFEEWEKQHNPAPAPAR.

Polar residues predominate over residues 1-10; the sequence is MFSSLNTRPA. The segment at 1–52 is disordered; the sequence is MFSSLNTRPAGQSLFGANTGGGLFGQSLANQPQQQQQPLQQQQQQAAPALGQ. The stretch at 13–17 is one SLFG repeat; that stretch reads SLFGA. The stretch at 22–25 is one GLFG repeat; it reads GLFG. Over residues 25–52 the composition is skewed to low complexity; the sequence is GQSLANQPQQQQQPLQQQQQQAAPALGQ. Coiled-coil stretches lie at residues 218-239 and 280-321; these read ALSG…TLND and EEIE…HNPA.

It belongs to the nucleoporin GLFG family. In terms of assembly, component of the nuclear pore complex (NPC). NPC constitutes the exclusive means of nucleocytoplasmic transport. NPCs allow the passive diffusion of ions and small molecules and the active, nuclear transport receptor-mediated bidirectional transport of macromolecules such as proteins, RNAs, ribonucleoparticles (RNPs), and ribosomal subunits across the nuclear envelope. Due to its 8-fold rotational symmetry, all subunits are present with 8 copies or multiples thereof.

It localises to the nucleus. The protein resides in the nuclear pore complex. It is found in the nucleus membrane. Functionally, functions as a component of the nuclear pore complex (NPC). NPC components, collectively referred to as nucleoporins (NUPs), can play the role of both NPC structural components and of docking or interaction partners for transiently associated nuclear transport factors. Active directional transport is assured by both, a Phe-Gly (FG) repeat affinity gradient for these transport factors across the NPC and a transport cofactor concentration gradient across the nuclear envelope (GSP1 and GSP2 GTPases associated predominantly with GTP in the nucleus, with GDP in the cytoplasm). NUP57 plays an important role in several nuclear transport pathways including poly(A)+ RNA, tRNA, and pre-ribosome transport. The polypeptide is Nucleoporin NUP57 (NUP57) (Chaetomium thermophilum (strain DSM 1495 / CBS 144.50 / IMI 039719) (Thermochaetoides thermophila)).